The sequence spans 149 residues: Oligosaccharyltransferase complex subunit ostc (149 aa).

The Cytoplasmic portion of the chain corresponds to 1–32; the sequence is METLFSLPFTVLECPNVKLKKPSWLHMPSAMT. A helical membrane pass occupies residues 33–53; that stretch reads VYAVVIVSYFLITGGIIYDVI. Over 54 to 83 the chain is Extracellular; the sequence is VEPPSVGSMTDEHGHQRPVAFLAYRVNGQY. A helical membrane pass occupies residues 84–104; that stretch reads IMEGLASSFLFTMGGLGFIIL. Residues 105–117 lie on the Cytoplasmic side of the membrane; sequence DRSNAPNIPKLNR. Residues 118–138 form a helical membrane-spanning segment; sequence FLLLFIGFVSVLLSFFMARVF. Residues 139-149 are Extracellular-facing; that stretch reads MRMKLPGYLMG.

Belongs to the OSTC family. In terms of assembly, specific component of the STT3A-containing form of the oligosaccharyltransferase (OST) complex.

Its subcellular location is the membrane. It participates in protein modification; protein glycosylation. Specific component of the STT3A-containing form of the oligosaccharyl transferase (OST) complex that catalyzes the initial transfer of a defined glycan (Glc(3)Man(9)GlcNAc(2) in eukaryotes) from the lipid carrier dolichol-pyrophosphate to an asparagine residue within an Asn-X-Ser/Thr consensus motif in nascent polypeptide chains, the first step in protein N-glycosylation. N-glycosylation occurs cotranslationally and the complex associates with the Sec61 complex at the channel-forming translocon complex that mediates protein translocation across the endoplasmic reticulum (ER). All subunits are required for a maximal enzyme activity. This Danio rerio (Zebrafish) protein is Oligosaccharyltransferase complex subunit ostc.